The primary structure comprises 134 residues: Holo-[acyl-carrier-protein] synthase (134 aa).

Positions 8 and 59 each coordinate Mg(2+).

It belongs to the P-Pant transferase superfamily. AcpS family. Mg(2+) is required as a cofactor.

The protein localises to the cytoplasm. The enzyme catalyses apo-[ACP] + CoA = holo-[ACP] + adenosine 3',5'-bisphosphate + H(+). Functionally, transfers the 4'-phosphopantetheine moiety from coenzyme A to a Ser of acyl-carrier-protein. The polypeptide is Holo-[acyl-carrier-protein] synthase (Zymomonas mobilis subsp. mobilis (strain ATCC 31821 / ZM4 / CP4)).